The following is a 343-amino-acid chain: F17g-G fimbrial adhesin (343 aa).

The N-terminal stretch at 1-22 is a signal peptide; that stretch reads MTNFYKVCLAVFILVCCNISHA. The segment at 23-199 is receptor-binding lectin domain; the sequence is AVSFIGSTEN…LNPFTLNDTV (177 aa). A carbohydrate is bound by residues 65 to 66, 110 to 111, and 138 to 141; these read AN, DT, and STQG. Cys-75 and Cys-132 are oxidised to a cystine. The tract at residues 200-343 is fimbrillin-binding domain; the sequence is TSCRLLTPSA…GISTFTFSYQ (144 aa). A disordered region spans residues 287–307; sequence LKFGPDSPVKGNENQWQLSTG. Polar residues predominate over residues 298–307; sequence NENQWQLSTG.

This sequence belongs to the fimbrial protein family.

It is found in the fimbrium. Essential fimbrial adhesion factor that mediates binding to N-acetylglucosamine-containing receptors in the host intestinal microvilli, leading to colonization of the intestinal tissue, and diarrhea or septicemia. Also confers adhesiveness to laminin and basement membranes. May be involved in the initiation of polymerization of fimbrillin monomers during fimbrial filament biogenesis. The sequence is that of F17g-G fimbrial adhesin (f17gG) from Escherichia coli.